We begin with the raw amino-acid sequence, 691 residues long: Elongation factor G (691 aa).

The tr-type G domain maps to 8 to 282 (ERVRNIGIAA…AVVDYLPAPI (275 aa)). Residues 17-24 (AHIDAGKT), 81-85 (DTPGH), and 135-138 (NKMD) contribute to the GTP site.

It belongs to the TRAFAC class translation factor GTPase superfamily. Classic translation factor GTPase family. EF-G/EF-2 subfamily.

The protein localises to the cytoplasm. Functionally, catalyzes the GTP-dependent ribosomal translocation step during translation elongation. During this step, the ribosome changes from the pre-translocational (PRE) to the post-translocational (POST) state as the newly formed A-site-bound peptidyl-tRNA and P-site-bound deacylated tRNA move to the P and E sites, respectively. Catalyzes the coordinated movement of the two tRNA molecules, the mRNA and conformational changes in the ribosome. This chain is Elongation factor G, found in Synechococcus sp. (strain CC9311).